The sequence spans 310 residues: Ribosomal RNA small subunit methyltransferase H (310 aa).

S-adenosyl-L-methionine contacts are provided by residues Ala-33–His-35, Asp-53, Phe-79, Asp-100, and Gln-107.

This sequence belongs to the methyltransferase superfamily. RsmH family.

Its subcellular location is the cytoplasm. It carries out the reaction cytidine(1402) in 16S rRNA + S-adenosyl-L-methionine = N(4)-methylcytidine(1402) in 16S rRNA + S-adenosyl-L-homocysteine + H(+). Specifically methylates the N4 position of cytidine in position 1402 (C1402) of 16S rRNA. The chain is Ribosomal RNA small subunit methyltransferase H from Desulfitobacterium hafniense (strain DSM 10664 / DCB-2).